Here is a 206-residue protein sequence, read N- to C-terminus: Small ribosomal subunit protein uS4 (206 aa).

The S4 RNA-binding domain maps to 96–156 (GRLDNVVYRM…EKAKKQARIK (61 aa)).

This sequence belongs to the universal ribosomal protein uS4 family. Part of the 30S ribosomal subunit. Contacts protein S5. The interaction surface between S4 and S5 is involved in control of translational fidelity.

In terms of biological role, one of the primary rRNA binding proteins, it binds directly to 16S rRNA where it nucleates assembly of the body of the 30S subunit. With S5 and S12 plays an important role in translational accuracy. The chain is Small ribosomal subunit protein uS4 from Aeromonas salmonicida (strain A449).